A 374-amino-acid polypeptide reads, in one-letter code: Chaperone protein DnaJ (374 aa).

In terms of domain architecture, J spans Asp-5–Gly-70. The CR-type zinc-finger motif lies at Gly-130 to Asp-207. Zn(2+) contacts are provided by Cys-143, Cys-146, Cys-159, Cys-162, Cys-181, Cys-184, Cys-195, and Cys-198. 4 CXXCXGXG motif repeats span residues Cys-143–Gly-150, Cys-159–Gly-166, Cys-181–Gly-188, and Cys-195–Gly-202.

This sequence belongs to the DnaJ family. In terms of assembly, homodimer. It depends on Zn(2+) as a cofactor.

The protein resides in the cytoplasm. In terms of biological role, participates actively in the response to hyperosmotic and heat shock by preventing the aggregation of stress-denatured proteins and by disaggregating proteins, also in an autonomous, DnaK-independent fashion. Unfolded proteins bind initially to DnaJ; upon interaction with the DnaJ-bound protein, DnaK hydrolyzes its bound ATP, resulting in the formation of a stable complex. GrpE releases ADP from DnaK; ATP binding to DnaK triggers the release of the substrate protein, thus completing the reaction cycle. Several rounds of ATP-dependent interactions between DnaJ, DnaK and GrpE are required for fully efficient folding. Also involved, together with DnaK and GrpE, in the DNA replication of plasmids through activation of initiation proteins. This Stenotrophomonas maltophilia (strain K279a) protein is Chaperone protein DnaJ.